The chain runs to 272 residues: Shikimate dehydrogenase (NADP(+)) (272 aa).

Residues 14–16 and Thr-61 each bind shikimate; that span reads SKS. Residue Lys-65 is the Proton acceptor of the active site. Shikimate-binding residues include Asn-86 and Asp-102. NADP(+) is bound by residues 126–130, 150–155, and Met-214; these read GAGGA and NRTASK. Shikimate is bound at residue Tyr-216. Gly-239 is a binding site for NADP(+).

It belongs to the shikimate dehydrogenase family. As to quaternary structure, homodimer.

The enzyme catalyses shikimate + NADP(+) = 3-dehydroshikimate + NADPH + H(+). Its pathway is metabolic intermediate biosynthesis; chorismate biosynthesis; chorismate from D-erythrose 4-phosphate and phosphoenolpyruvate: step 4/7. Involved in the biosynthesis of the chorismate, which leads to the biosynthesis of aromatic amino acids. Catalyzes the reversible NADPH linked reduction of 3-dehydroshikimate (DHSA) to yield shikimate (SA). This Pseudoalteromonas atlantica (strain T6c / ATCC BAA-1087) protein is Shikimate dehydrogenase (NADP(+)).